We begin with the raw amino-acid sequence, 185 residues long: MGGLWSMVLPVLSDQKNPNRSPLMSDIAQKVEALAIQAAKTEDCEVVEVIYRREGGVYVVRVAADKLPDDQGQERHISLDECGSISRQISSLLDVHDVIPNAYHLEVSSPGIERPLIKDGDFTRFAGKLVEIRTYQPMDTESGPRKKFRGTLLGLQEAMVVVAEANGEVRIPWEQVAKAHLTFDF.

Belongs to the RimP family.

The protein resides in the cytoplasm. Required for maturation of 30S ribosomal subunits. This is Ribosome maturation factor RimP from Magnetococcus marinus (strain ATCC BAA-1437 / JCM 17883 / MC-1).